The sequence spans 292 residues: ATP synthase gamma chain (292 aa).

This sequence belongs to the ATPase gamma chain family. F-type ATPases have 2 components, CF(1) - the catalytic core - and CF(0) - the membrane proton channel. CF(1) has five subunits: alpha(3), beta(3), gamma(1), delta(1), epsilon(1). CF(0) has three main subunits: a, b and c.

The protein localises to the cell inner membrane. Produces ATP from ADP in the presence of a proton gradient across the membrane. The gamma chain is believed to be important in regulating ATPase activity and the flow of protons through the CF(0) complex. The protein is ATP synthase gamma chain of Methylobacterium nodulans (strain LMG 21967 / CNCM I-2342 / ORS 2060).